Here is a 166-residue protein sequence, read N- to C-terminus: Large ribosomal subunit protein uL10 (166 aa).

It belongs to the universal ribosomal protein uL10 family. In terms of assembly, part of the ribosomal stalk of the 50S ribosomal subunit. The N-terminus interacts with L11 and the large rRNA to form the base of the stalk. The C-terminus forms an elongated spine to which L12 dimers bind in a sequential fashion forming a multimeric L10(L12)X complex.

Functionally, forms part of the ribosomal stalk, playing a central role in the interaction of the ribosome with GTP-bound translation factors. This Bacillus licheniformis (strain ATCC 14580 / DSM 13 / JCM 2505 / CCUG 7422 / NBRC 12200 / NCIMB 9375 / NCTC 10341 / NRRL NRS-1264 / Gibson 46) protein is Large ribosomal subunit protein uL10.